The primary structure comprises 207 residues: High frequency lysogenization protein HflD homolog (207 aa).

This sequence belongs to the HflD family.

The protein localises to the cytoplasm. It is found in the cell inner membrane. This chain is High frequency lysogenization protein HflD homolog, found in Pseudomonas fluorescens (strain ATCC BAA-477 / NRRL B-23932 / Pf-5).